Consider the following 398-residue polypeptide: uncharacterized protein (398 aa).

The Radical SAM core domain maps to 21-253; it reads TNFGPTNLII…WQLTSTSEPE (233 aa). 3 residues coordinate [4Fe-4S] cluster: C37, C41, and C44.

Belongs to the radical SAM superfamily. Anaerobic sulfatase-maturating enzyme family. Requires [4Fe-4S] cluster as cofactor.

This is an uncharacterized protein from Synechocystis sp. (strain ATCC 27184 / PCC 6803 / Kazusa).